We begin with the raw amino-acid sequence, 230 residues long: UPF0494 membrane protein PB2B2.14c (230 aa).

The next 3 helical transmembrane spans lie at 78 to 98 (WPLLIIWCILIVFAIDKNFEV), 120 to 140 (IWGPIAIYICLFVLLLLGLIY), and 148 to 168 (AIPLISIVIAAVVVIIAVAMV).

It belongs to the UPF0494 family.

The protein localises to the membrane. The chain is UPF0494 membrane protein PB2B2.14c from Schizosaccharomyces pombe (strain 972 / ATCC 24843) (Fission yeast).